Reading from the N-terminus, the 837-residue chain is Katanin p80 WD40 repeat-containing subunit B1 homolog KTN80.4 (837 aa).

7 WD repeats span residues 14–54 (AHSA…AILS), 57–96 (GHSS…IVRT), 99–138 (GHRS…CIHT), 141–182 (GHTR…TEFK), 184–222 (HEGQ…LIGS), 225–265 (PETA…DGVD), and 267–304 (GWSR…TEPC). The DWD box motif lies at 115–131 (FFASGSLDTNLKIWDIR). Disordered stretches follow at residues 307–328 (GDTA…DPVV), 358–462 (GRLS…ANPV), and 501–614 (LQAA…LVIN). Composition is skewed to polar residues over residues 376–387 (IGRSSTSQNSES) and 412–450 (TFSS…TSRR). The span at 509 to 520 (SPSSRNNPDLPD) shows a compositional bias: low complexity. 2 stretches are compositionally biased toward basic and acidic residues: residues 553–563 (ATERSINDFRY) and 580–595 (RNHD…RSNR).

The protein belongs to the WD repeat KATNB1 family. Component of KTN80-KTN1 complexes composed of a hexamer of KTN1-KTN80 heterodimers that sense microtubule (MT) geometry to confer precise MT severing. Interacts directly with AAA1/KTN1, and weakly with KTN80.1 and KTN80.3. Expressed in siliques, flowers, leaves, stems and roots.

Its subcellular location is the cytoplasm. The protein localises to the cytoskeleton. Functionally, may participate in a complex which severs microtubules in an ATP-dependent manner. This activity may promote rapid reorganization of cellular microtubule arrays. Confers precision to microtubule (MT) severing by specific targeting of KTN1 to MT cleavage sites such as crossover or branching nucleation sites. Together with other KTN80s, regulates cell elongation by modulating MT organization. The protein is Katanin p80 WD40 repeat-containing subunit B1 homolog KTN80.4 of Arabidopsis thaliana (Mouse-ear cress).